The following is a 739-amino-acid chain: DNA ligase (739 aa).

NAD(+)-binding positions include 34–38 (DADYD), 83–84 (SL), and glutamate 117. The N6-AMP-lysine intermediate role is filled by lysine 119. Positions 140, 175, 291, and 315 each coordinate NAD(+). Residues cysteine 420, cysteine 423, cysteine 438, and cysteine 444 each contribute to the Zn(2+) site. In terms of domain architecture, BRCT spans 660–739 (ADDSPVAGKT…DGWLDLIGQA (80 aa)).

This sequence belongs to the NAD-dependent DNA ligase family. LigA subfamily. Mg(2+) serves as cofactor. Requires Mn(2+) as cofactor.

The catalysed reaction is NAD(+) + (deoxyribonucleotide)n-3'-hydroxyl + 5'-phospho-(deoxyribonucleotide)m = (deoxyribonucleotide)n+m + AMP + beta-nicotinamide D-nucleotide.. DNA ligase that catalyzes the formation of phosphodiester linkages between 5'-phosphoryl and 3'-hydroxyl groups in double-stranded DNA using NAD as a coenzyme and as the energy source for the reaction. It is essential for DNA replication and repair of damaged DNA. This chain is DNA ligase, found in Ruegeria sp. (strain TM1040) (Silicibacter sp.).